A 65-amino-acid polypeptide reads, in one-letter code: MPKLKTKSSAAKRFKKTGKGGFKHRCANRAHINTKMTTKRKRHLRGMNQVAKVDTTSLVQQMPYA.

The segment at 1–25 (MPKLKTKSSAAKRFKKTGKGGFKHR) is disordered.

This sequence belongs to the bacterial ribosomal protein bL35 family.

In Francisella tularensis subsp. holarctica (strain FTNF002-00 / FTA), this protein is Large ribosomal subunit protein bL35.